A 344-amino-acid chain; its full sequence is Dihydroorotase (344 aa).

Positions 13 and 15 each coordinate Zn(2+). Residues 15-17 (HFR) and asparagine 41 each bind substrate. Zn(2+) is bound by residues lysine 98, histidine 135, and histidine 173. Position 98 is an N6-carboxylysine (lysine 98). Histidine 135 is a substrate binding site. Leucine 218 contacts substrate. Residue aspartate 246 participates in Zn(2+) binding. Aspartate 246 is a catalytic residue. Histidine 250 and alanine 262 together coordinate substrate.

The protein belongs to the metallo-dependent hydrolases superfamily. DHOase family. Class II DHOase subfamily. Homodimer. Requires Zn(2+) as cofactor.

The enzyme catalyses (S)-dihydroorotate + H2O = N-carbamoyl-L-aspartate + H(+). The protein operates within pyrimidine metabolism; UMP biosynthesis via de novo pathway; (S)-dihydroorotate from bicarbonate: step 3/3. Functionally, catalyzes the reversible cyclization of carbamoyl aspartate to dihydroorotate. This Shewanella sediminis (strain HAW-EB3) protein is Dihydroorotase.